A 476-amino-acid chain; its full sequence is Protein transport protein Sec61 subunit alpha (476 aa).

At 2–33 (GIKFLEFIKPFCAVLPEIQKPERKIQFREKVL) the chain is on the cytoplasmic side. Residues 34 to 53 (WTAITLFIFLVCCQIPLFGI) form a helical membrane-spanning segment. The Lumenal segment spans residues 54–76 (MSSDSADPFYWMRVILASNRGTL). Residues 77 to 96 (MELGISPIVTSGLIMQLLAG) traverse the membrane as a helical segment. Residues 97–117 (AKIIEVGDTPKDRALFNGAQK) are Cytoplasmic-facing. The chain crosses the membrane as a helical span at residues 118–138 (LFGMIITIGQAIVYVMTGMYG). Residues 139–144 (DPSEMG) lie on the Lumenal side of the membrane. The chain crosses the membrane as a helical span at residues 145–165 (AGICLLIIIQLFVAGLIVLLL). At 166 to 172 (DELLQKG) the chain is on the cytoplasmic side. The chain crosses the membrane as a helical span at residues 173–193 (YGLGSGISLFIATNICETIVW). The Lumenal portion of the chain corresponds to 194 to 240 (KAFSPTTVNTGRGTEFEGAIIALFHLLATRTDKVRALREAFYRQNLP). Residues 241 to 261 (NILNLIATVFVFAVVIYFQGF) traverse the membrane as a helical segment. At 262 to 288 (RVDLPIKSARYRGQYNTYPIKLFYTSN) the chain is on the cytoplasmic side. The helical transmembrane segment at 289-309 (IPIILQSALVSNLYVISQMLS) threads the bilayer. At 310 to 354 (TRFSGNFLVNLLGTWSDATSGGPARAYPVAGLCYYLSPPESFGSV) the chain is on the lumenal side. A helical transmembrane segment spans residues 355–375 (LDDPVHAAIYIVFMLGSCAFF). The Cytoplasmic segment spans residues 376 to 420 (SKTWIEVSGSSAKDVAKQLKEQQMVMRGHRETSMVHELNRYIPTA). The helical transmembrane segment at 421–441 (AAFGGLCIGGLSVMADFLGAI) threads the bilayer. The Lumenal segment spans residues 442–445 (GSGT). The chain crosses the membrane as a helical span at residues 446–462 (GILLAVTIIYQYFEIFV). Topologically, residues 463–476 (KEQSEMGSMGALLF) are cytoplasmic.

It belongs to the SecY/SEC61-alpha family. The SEC61 channel-forming translocon complex consists of channel-forming core components SEC61A1, SEC61B and SEC61G and different auxiliary components such as SEC62 and SEC63. The SEC61 channel associates with the multi-pass translocon (MPT) complex.

It localises to the endoplasmic reticulum membrane. In terms of biological role, component of SEC61 channel-forming translocon complex that mediates transport of signal peptide-containing precursor polypeptides across the endoplasmic reticulum (ER). Forms a ribosome receptor and a gated pore in the ER membrane, both functions required for cotranslational translocation of nascent polypeptides. May cooperate with auxiliary protein SEC62, SEC63 and HSPA5/BiP to enable post-translational transport of small presecretory proteins. The SEC61 channel is also involved in ER membrane insertion of transmembrane proteins: it mediates membrane insertion of the first few transmembrane segments of proteins, while insertion of subsequent transmembrane regions of multi-pass membrane proteins is mediated by the multi-pass translocon (MPT) complex. The chain is Protein transport protein Sec61 subunit alpha (sec61a) from Notothenia angustata (Rockcod).